Reading from the N-terminus, the 1258-residue chain is Plasma membrane calcium-transporting ATPase 3 (1258 aa).

The span at M1–R19 shows a compositional bias: polar residues. The interval M1–P22 is disordered. Over M1–T97 the chain is Cytoplasmic. S8 bears the Phosphoserine mark. The helical transmembrane segment at F98–A118 threads the bilayer. The Extracellular portion of the chain corresponds to I119–I155. Residues E156 to W176 traverse the membrane as a helical segment. Residues S177–L364 lie on the Cytoplasmic side of the membrane. Disordered regions lie at residues E298–A328 and K335–K354. 2 stretches are compositionally biased toward basic and acidic residues: residues E299–Q308 and M342–K354. Residues T365–I384 traverse the membrane as a helical segment. Over I385–F417 the chain is Extracellular. The helical transmembrane segment at F418–L435 threads the bilayer. At A436–I849 the chain is on the cytoplasmic side. The active-site 4-aspartylphosphate intermediate is the D473. Mg(2+)-binding residues include D794 and D798. A helical membrane pass occupies residues S850–T869. At G870–L879 the chain is on the extracellular side. Residues K880–A900 form a helical membrane-spanning segment. Residues T901–L920 lie on the Cytoplasmic side of the membrane. The chain crosses the membrane as a helical span at residues I921–L943. The Extracellular segment spans residues L944–L961. A helical transmembrane segment spans residues H962 to N983. The Cytoplasmic segment spans residues E984–S1002. Residues N1003–G1024 traverse the membrane as a helical segment. The Extracellular segment spans residues G1025–S1034. Residues T1035–A1056 form a helical membrane-spanning segment. The Cytoplasmic segment spans residues T1057–L1258. T1079 is modified (phosphothreonine). Residues L1097 to Q1114 form a calmodulin-binding subdomain A region. T1113 carries the phosphothreonine; by PKC modification. The calmodulin-binding subdomain B stretch occupies residues M1115 to S1124. S1126 carries the phosphoserine modification. The disordered stretch occupies residues E1204–L1258. Over residues T1231 to S1245 the composition is skewed to low complexity.

Belongs to the cation transport ATPase (P-type) (TC 3.A.3) family. Type IIB subfamily. As to quaternary structure, interacts with PDZD11. Interacts (via N-terminus) with YWHAE. In terms of tissue distribution, expressed predominantly in brain and skeletal muscle. Expressed in the molecular layer of the cerebellar cortex, in particular in granule cells (at protein level). Expressed in aldosterone producing glomerulosa cells of adrenal glands (at protein level). Detected at low levels in various tissues including testis, stomach, small intestine, and large intestine. Most abundant form in brain and most other tissues. As to expression, most abundant form in skeletal muscle and is also found in brain and at low levels in testis and kidney.

It localises to the cell membrane. It is found in the presynaptic cell membrane. It carries out the reaction Ca(2+)(in) + ATP + H2O = Ca(2+)(out) + ADP + phosphate + H(+). Functionally, ATP-driven Ca(2+) ion pump involved in the maintenance of basal intracellular Ca(2+) levels at the presynaptic terminals. Uses ATP as an energy source to transport cytosolic Ca(2+) ions across the plasma membrane to the extracellular compartment. May counter-transport protons, but the mechanism and the stoichiometry of this Ca(2+)/H(+) exchange remains to be established. This Rattus norvegicus (Rat) protein is Plasma membrane calcium-transporting ATPase 3 (Atp2b3).